Consider the following 364-residue polypeptide: Histidinol-phosphate aminotransferase 1 (364 aa).

Lysine 211 bears the N6-(pyridoxal phosphate)lysine mark.

It belongs to the class-II pyridoxal-phosphate-dependent aminotransferase family. Histidinol-phosphate aminotransferase subfamily. Homodimer. Requires pyridoxal 5'-phosphate as cofactor.

It carries out the reaction L-histidinol phosphate + 2-oxoglutarate = 3-(imidazol-4-yl)-2-oxopropyl phosphate + L-glutamate. It participates in amino-acid biosynthesis; L-histidine biosynthesis; L-histidine from 5-phospho-alpha-D-ribose 1-diphosphate: step 7/9. The chain is Histidinol-phosphate aminotransferase 1 from Legionella pneumophila (strain Paris).